The sequence spans 267 residues: MNALLSNPFKEGLREGDTQIGLWLSSTTSYMAEIAATSGYDWLLIDGEHAPNTVQDLYHQLQAIAPYASQPVIRLIEGSKALIKQVLDIGAQTLLIPMVDTAEQARQVVSATRYPPLGQRGVGASVARAARWGRIDNYMAQANESLCLLVQVESKVALENLDAILEVEGIDGVFIGPADLSASLGYPDNAGHPEVQRIIESCIYRIRAAGKAAGFLAVDPAMAQKCLAWGANFVAVGVDTMLYTEALDSRLAMFKSVQSVSTAKRSY.

The Proton acceptor role is filled by histidine 49. Glutamine 151 contacts substrate. Residue glutamate 153 participates in Mg(2+) binding. 2 residues coordinate substrate: alanine 178 and aspartate 179. Position 179 (aspartate 179) interacts with Mg(2+).

It belongs to the HpcH/HpaI aldolase family. KDR aldolase subfamily. As to quaternary structure, homohexamer. Mg(2+) is required as a cofactor.

The enzyme catalyses 2-dehydro-3-deoxy-L-rhamnonate = (S)-lactaldehyde + pyruvate. In terms of biological role, catalyzes the reversible retro-aldol cleavage of 2-keto-3-deoxy-L-rhamnonate (KDR) to pyruvate and lactaldehyde. The protein is 2-keto-3-deoxy-L-rhamnonate aldolase of Salmonella gallinarum (strain 287/91 / NCTC 13346).